A 48-amino-acid polypeptide reads, in one-letter code: M-oxotoxin-Ot1b (48 aa).

Its subcellular location is the secreted. The protein localises to the target cell membrane. Disrupts cell membranes, particularly those rich in phosphocholine, through formation of pores. Has antimicrobial activity, hemolytic activity and insecticidal activity. In Oxyopes takobius (Lynx spider), this protein is M-oxotoxin-Ot1b.